The sequence spans 751 residues: Photosystem I P700 chlorophyll a apoprotein A1 (751 aa).

8 helical membrane passes run 73-96 (VFSA…FHGA), 159-182 (LYST…FHFH), 198-222 (LNHH…HVSL), 294-312 (TAHH…GHMY), 349-372 (WHAQ…HHQY), 388-414 (LSLF…IFMI), 436-458 (AIIS…LYIH), and 533-551 (FLVH…LILL). Cys575 and Cys584 together coordinate [4Fe-4S] cluster. The next 2 membrane-spanning stretches (helical) occupy residues 591 to 612 (HVFL…HFSW) and 665 to 687 (LSAY…MFLF). Residue His676 coordinates chlorophyll a'. Met684 and Tyr692 together coordinate chlorophyll a. A phylloquinone-binding site is contributed by Trp693. The helical transmembrane segment at 725-745 (AVGVAHYLLGGIATTWSFFLA) threads the bilayer.

It belongs to the PsaA/PsaB family. In terms of assembly, the PsaA/B heterodimer binds the P700 chlorophyll special pair and subsequent electron acceptors. PSI consists of a core antenna complex that captures photons, and an electron transfer chain that converts photonic excitation into a charge separation. The eukaryotic PSI reaction center is composed of at least 11 subunits. The cofactor is P700 is a chlorophyll a/chlorophyll a' dimer, A0 is one or more chlorophyll a, A1 is one or both phylloquinones and FX is a shared 4Fe-4S iron-sulfur center..

The protein localises to the plastid. The protein resides in the chloroplast thylakoid membrane. It carries out the reaction reduced [plastocyanin] + hnu + oxidized [2Fe-2S]-[ferredoxin] = oxidized [plastocyanin] + reduced [2Fe-2S]-[ferredoxin]. Functionally, psaA and PsaB bind P700, the primary electron donor of photosystem I (PSI), as well as the electron acceptors A0, A1 and FX. PSI is a plastocyanin/cytochrome c6-ferredoxin oxidoreductase, converting photonic excitation into a charge separation, which transfers an electron from the donor P700 chlorophyll pair to the spectroscopically characterized acceptors A0, A1, FX, FA and FB in turn. Oxidized P700 is reduced on the lumenal side of the thylakoid membrane by plastocyanin or cytochrome c6. This is Photosystem I P700 chlorophyll a apoprotein A1 from Tupiella akineta (Green alga).